A 143-amino-acid chain; its full sequence is Ribosome maturation factor RimP (143 aa).

Belongs to the RimP family.

The protein localises to the cytoplasm. In terms of biological role, required for maturation of 30S ribosomal subunits. This Borrelia hermsii (strain HS1 / DAH) protein is Ribosome maturation factor RimP.